The chain runs to 259 residues: MRTADLFYALYARRLRRQTAAGPLPKHIGLIMDGNRRWARQMGMANPSIGHRYGAEHVESVLSWCETAGIKHVTVFVCSTENLQRRGDTEVSFLMQVIEQVVAVHLARPDARWQVRIAGTLDXPCADSTAHALKEAVEATRRCTTGSQVTLAIGYGGRQEVIDAVRELLHEQAAAGTTLEDLAASLTMDDITRHLYTAGQPDPDLVIRTSGEQRMSNFLLWQSAYSELYFCEAYWPAFREIDFLRALRSYAARQRRYGA.

Aspartate 33 is an active-site residue. Aspartate 33 is a binding site for Mg(2+). Substrate is bound by residues 34–37 (GNRR), tryptophan 38, histidine 51, and 79–81 (STE). Residue asparagine 82 is the Proton acceptor of the active site. Residues arginine 86, arginine 208, and 214-216 (RMS) contribute to the substrate site. Glutamate 227 is a binding site for Mg(2+).

This sequence belongs to the UPP synthase family. As to quaternary structure, homodimer. It depends on Mg(2+) as a cofactor.

Catalyzes the condensation of isopentenyl diphosphate (IPP) with allylic pyrophosphates generating different type of terpenoids. This chain is Isoprenyl transferase, found in Streptomyces fradiae (Streptomyces roseoflavus).